The primary structure comprises 375 residues: Succinyl-diaminopimelate desuccinylase (375 aa).

Position 66 (histidine 66) interacts with Zn(2+). Aspartate 68 is an active-site residue. Zn(2+) is bound at residue aspartate 99. Glutamate 133 serves as the catalytic Proton acceptor. Zn(2+) contacts are provided by glutamate 134, glutamate 162, and histidine 348.

Belongs to the peptidase M20A family. DapE subfamily. In terms of assembly, homodimer. Zn(2+) serves as cofactor. Co(2+) is required as a cofactor.

The enzyme catalyses N-succinyl-(2S,6S)-2,6-diaminopimelate + H2O = (2S,6S)-2,6-diaminopimelate + succinate. It participates in amino-acid biosynthesis; L-lysine biosynthesis via DAP pathway; LL-2,6-diaminopimelate from (S)-tetrahydrodipicolinate (succinylase route): step 3/3. Catalyzes the hydrolysis of N-succinyl-L,L-diaminopimelic acid (SDAP), forming succinate and LL-2,6-diaminopimelate (DAP), an intermediate involved in the bacterial biosynthesis of lysine and meso-diaminopimelic acid, an essential component of bacterial cell walls. In Shigella boydii serotype 18 (strain CDC 3083-94 / BS512), this protein is Succinyl-diaminopimelate desuccinylase.